Reading from the N-terminus, the 166-residue chain is Ribosome-binding factor A (166 aa).

Residues 122-166 (HVADETDVEDSTDHEDDVTNSEDETKHVDIDTDSEEGTNTDGKAQ) form a disordered region. Residues 126–143 (ETDVEDSTDHEDDVTNSE) show a composition bias toward acidic residues.

Belongs to the RbfA family. In terms of assembly, monomer. Binds 30S ribosomal subunits, but not 50S ribosomal subunits or 70S ribosomes.

The protein resides in the cytoplasm. Its function is as follows. One of several proteins that assist in the late maturation steps of the functional core of the 30S ribosomal subunit. Associates with free 30S ribosomal subunits (but not with 30S subunits that are part of 70S ribosomes or polysomes). Required for efficient processing of 16S rRNA. May interact with the 5'-terminal helix region of 16S rRNA. This is Ribosome-binding factor A from Pseudoalteromonas translucida (strain TAC 125).